Reading from the N-terminus, the 136-residue chain is Cytokine-like protein 1 (136 aa).

An N-terminal signal peptide occupies residues Met-1–Pro-22.

Specifically expressed in CD34+ hematopoietic cells.

The protein resides in the secreted. The protein is Cytokine-like protein 1 (CYTL1) of Homo sapiens (Human).